The following is a 298-amino-acid chain: ATP synthase gamma chain (298 aa).

Belongs to the ATPase gamma chain family. F-type ATPases have 2 components, CF(1) - the catalytic core - and CF(0) - the membrane proton channel. CF(1) has five subunits: alpha(3), beta(3), gamma(1), delta(1), epsilon(1). CF(0) has three main subunits: a, b and c.

The protein localises to the cell inner membrane. Its function is as follows. Produces ATP from ADP in the presence of a proton gradient across the membrane. The gamma chain is believed to be important in regulating ATPase activity and the flow of protons through the CF(0) complex. The chain is ATP synthase gamma chain from Albidiferax ferrireducens (strain ATCC BAA-621 / DSM 15236 / T118) (Rhodoferax ferrireducens).